The primary structure comprises 333 residues: MAKIYYDEDASLDILKDKVIAILGYGSQGHAHALNLRDSGLNVIIGLHEGSRSREKAKADGFEVYTPREAAKRADIIMFLIPDTVQPEVYKNEVEPELNSSKTLAFAHGFNIHFRQIVPPKDVDVFMVAPKGPGHLVRWMYTEGKGVPALVAIHQDASGTCKDKALAYAKGIGATRAGVIETTFKEETETDLFGEQMVLCGGVTALIKAGFETLVNAGYQPEVAYFECLHELKLIVDLIYEHGISGMRYSISDTAKYGDVTRGERIYKVVKPVMEKTLEEIQKGEFAREWILENKAGRPVYYALLERDREHLVEKVGEELRKMMPWLGKKELK.

A KARI N-terminal Rossmann domain is found at 2–182 (AKIYYDEDAS…GATRAGVIET (181 aa)). NADP(+)-binding positions include 25–28 (YGSQ), Ser51, Ser53, and 83–86 (DTVQ). His108 is a catalytic residue. Gly134 lines the NADP(+) pocket. Positions 183–327 (TFKEETETDL…EELRKMMPWL (145 aa)) constitute a KARI C-terminal knotted domain. Residues Asp191, Glu195, Glu227, and Glu231 each contribute to the Mg(2+) site. Residue Ser252 coordinates substrate.

It belongs to the ketol-acid reductoisomerase family. Mg(2+) serves as cofactor.

It catalyses the reaction (2R)-2,3-dihydroxy-3-methylbutanoate + NADP(+) = (2S)-2-acetolactate + NADPH + H(+). It carries out the reaction (2R,3R)-2,3-dihydroxy-3-methylpentanoate + NADP(+) = (S)-2-ethyl-2-hydroxy-3-oxobutanoate + NADPH + H(+). Its pathway is amino-acid biosynthesis; L-isoleucine biosynthesis; L-isoleucine from 2-oxobutanoate: step 2/4. The protein operates within amino-acid biosynthesis; L-valine biosynthesis; L-valine from pyruvate: step 2/4. Its function is as follows. Involved in the biosynthesis of branched-chain amino acids (BCAA). Catalyzes an alkyl-migration followed by a ketol-acid reduction of (S)-2-acetolactate (S2AL) to yield (R)-2,3-dihydroxy-isovalerate. In the isomerase reaction, S2AL is rearranged via a Mg-dependent methyl migration to produce 3-hydroxy-3-methyl-2-ketobutyrate (HMKB). In the reductase reaction, this 2-ketoacid undergoes a metal-dependent reduction by NADPH to yield (R)-2,3-dihydroxy-isovalerate. In Aquifex aeolicus (strain VF5), this protein is Ketol-acid reductoisomerase (NADP(+)).